Reading from the N-terminus, the 673-residue chain is DNA ligase (673 aa).

NAD(+)-binding positions include 33 to 37 (DAEYD), 82 to 83 (SL), and Glu114. The active-site N6-AMP-lysine intermediate is Lys116. 4 residues coordinate NAD(+): Arg137, Glu174, Lys291, and Lys315. Residues Cys409, Cys412, Cys427, and Cys433 each coordinate Zn(2+). Residues 592-673 (AQEQPLAGLV…LINLLEQHNG (82 aa)) form the BRCT domain.

Belongs to the NAD-dependent DNA ligase family. LigA subfamily. Mg(2+) is required as a cofactor. The cofactor is Mn(2+).

It catalyses the reaction NAD(+) + (deoxyribonucleotide)n-3'-hydroxyl + 5'-phospho-(deoxyribonucleotide)m = (deoxyribonucleotide)n+m + AMP + beta-nicotinamide D-nucleotide.. Functionally, DNA ligase that catalyzes the formation of phosphodiester linkages between 5'-phosphoryl and 3'-hydroxyl groups in double-stranded DNA using NAD as a coenzyme and as the energy source for the reaction. It is essential for DNA replication and repair of damaged DNA. The polypeptide is DNA ligase (Pseudoalteromonas translucida (strain TAC 125)).